The chain runs to 342 residues: Alpha-tocopherol transfer protein-like (342 aa).

Residues 1–31 (MSEESDSLRTSPSVASLSENELPPPPEPPGY) are disordered. Residues 8–19 (LRTSPSVASLSE) show a composition bias toward polar residues. The CRAL-TRIO domain maps to 117–282 (KPSALKDVLA…EYGGTAGELD (166 aa)).

In terms of biological role, may act as a protein that binds a hydrophobic ligand. This chain is Alpha-tocopherol transfer protein-like (TTPAL), found in Homo sapiens (Human).